A 161-amino-acid polypeptide reads, in one-letter code: Protein-export protein SecB (161 aa).

This sequence belongs to the SecB family. As to quaternary structure, homotetramer, a dimer of dimers. One homotetramer interacts with 1 SecA dimer.

It localises to the cytoplasm. Functionally, one of the proteins required for the normal export of preproteins out of the cell cytoplasm. It is a molecular chaperone that binds to a subset of precursor proteins, maintaining them in a translocation-competent state. It also specifically binds to its receptor SecA. This is Protein-export protein SecB from Rhodopseudomonas palustris (strain BisA53).